The chain runs to 231 residues: Albumin-2 (231 aa).

Hemopexin repeat units lie at residues 4 to 55 (TGYI…FKSL), 62 to 112 (SYGV…FPFF), 118 to 166 (ENGI…FPCF), and 172 to 223 (ESGT…WPSL). Ca(2+) contacts are provided by Asn8, Asp66, Asp122, and Asp176.

Monomer and homodimer.

The protein resides in the cytoplasm. Its subcellular location is the cytosol. Its function is as follows. May play a role in response to oxidative stress and polyamine biosynthesis. This is Albumin-2 from Pisum sativum (Garden pea).